The primary structure comprises 298 residues: ATP synthase F(1) complex subunit gamma, mitochondrial (298 aa).

Residues 1–25 constitute a mitochondrion transit peptide; it reads MFSRASVVGLSACAVQPQWIQVRNM. At lysine 39 the chain carries N6-acetyllysine. Lysine 49 carries the post-translational modification N6-succinyllysine. Residue lysine 55 is modified to N6-acetyllysine. Lysine 115 is modified (N6-acetyllysine; alternate). Residue lysine 115 is modified to N6-succinyllysine; alternate. Lysine 138 carries the N6-acetyllysine modification. Serine 146 is subject to Phosphoserine. Lysine 154 carries the N6-acetyllysine; alternate modification. Lysine 154 carries the N6-succinyllysine; alternate modification. The residue at position 197 (lysine 197) is an N6-acetyllysine. Lysine 270 is subject to N6-succinyllysine.

It belongs to the ATPase gamma chain family. In terms of assembly, component of the ATP synthase complex composed at least of ATP5F1A/subunit alpha, ATP5F1B/subunit beta, ATP5MC1/subunit c (homooctomer), MT-ATP6/subunit a, MT-ATP8/subunit 8, ATP5ME/subunit e, ATP5MF/subunit f, ATP5MG/subunit g, ATP5MK/subunit k, ATP5MJ/subunit j, ATP5F1C/subunit gamma, ATP5F1D/subunit delta, ATP5F1E/subunit epsilon, ATP5PF/subunit F6, ATP5PB/subunit b, ATP5PD/subunit d, ATP5PO/subunit OSCP. ATP synthase complex consists of a soluble F(1) head domain (subunits alpha(3) and beta(3)) - the catalytic core - and a membrane F(0) domain - the membrane proton channel (subunits c, a, 8, e, f, g, k and j). These two domains are linked by a central stalk (subunits gamma, delta, and epsilon) rotating inside the F1 region and a stationary peripheral stalk (subunits F6, b, d, and OSCP). Interacts with FLVCR2; this interaction occurs in the absence of heme and is disrupted upon heme binding.

The protein resides in the mitochondrion inner membrane. Its function is as follows. Subunit gamma, of the mitochondrial membrane ATP synthase complex (F(1)F(0) ATP synthase or Complex V) that produces ATP from ADP in the presence of a proton gradient across the membrane which is generated by electron transport complexes of the respiratory chain. ATP synthase complex consist of a soluble F(1) head domain - the catalytic core - and a membrane F(1) domain - the membrane proton channel. These two domains are linked by a central stalk rotating inside the F(1) region and a stationary peripheral stalk. During catalysis, ATP synthesis in the catalytic domain of F(1) is coupled via a rotary mechanism of the central stalk subunits to proton translocation. In vivo, can only synthesize ATP although its ATP hydrolase activity can be activated artificially in vitro. With the central stalk subunit delta, is essential for the biogenesis of F(1) catalytic part of the ATP synthase complex namely in the formation of F1 assembly intermediate. This Mus musculus (Mouse) protein is ATP synthase F(1) complex subunit gamma, mitochondrial.